Reading from the N-terminus, the 131-residue chain is Profilin LP04 (131 aa).

Belongs to the profilin family. As to quaternary structure, occurs in many kinds of cells as a complex with monomeric actin in a 1:1 ratio.

The protein resides in the cytoplasm. Its subcellular location is the cytoskeleton. In terms of biological role, binds to actin and affects the structure of the cytoskeleton. At high concentrations, profilin prevents the polymerization of actin, whereas it enhances it at low concentrations. By binding to PIP2, it inhibits the formation of IP3 and DG. The chain is Profilin LP04 from Oryza sativa subsp. indica (Rice).